The following is a 227-amino-acid chain: MSAISKNIIIINKPIKWTSNDVVQKVKRVIGAKKVGHAGTLDPNASGVLVLGINEGTKLLTKLILDNKSYIAEIKFGTSTNTYDAAGEIVSSTNRMVTLTEVTKIVKDFYKNDYWQKPPQFSALKINGQKAYVLARQKVDFEIAPRLVKIFKYQIMDFNYEKQILKISLHVSKGFYVRSFAVDLATKINNLAHLLTLIRTQSGPFEIKDAIEIEQVYDYWNNINKYL.

Asp-42 functions as the Nucleophile in the catalytic mechanism.

Belongs to the pseudouridine synthase TruB family. Type 1 subfamily.

It carries out the reaction uridine(55) in tRNA = pseudouridine(55) in tRNA. Responsible for synthesis of pseudouridine from uracil-55 in the psi GC loop of transfer RNAs. This Ureaplasma parvum serovar 3 (strain ATCC 27815 / 27 / NCTC 11736) protein is tRNA pseudouridine synthase B.